A 599-amino-acid chain; its full sequence is Elongation factor 4 (599 aa).

Positions 2-184 (KNIRNFSIIA…RLVRDIPPPE (183 aa)) constitute a tr-type G domain. GTP is bound by residues 14–19 (DHGKST) and 131–134 (NKID).

Belongs to the TRAFAC class translation factor GTPase superfamily. Classic translation factor GTPase family. LepA subfamily.

It is found in the cell inner membrane. The enzyme catalyses GTP + H2O = GDP + phosphate + H(+). Its function is as follows. Required for accurate and efficient protein synthesis under certain stress conditions. May act as a fidelity factor of the translation reaction, by catalyzing a one-codon backward translocation of tRNAs on improperly translocated ribosomes. Back-translocation proceeds from a post-translocation (POST) complex to a pre-translocation (PRE) complex, thus giving elongation factor G a second chance to translocate the tRNAs correctly. Binds to ribosomes in a GTP-dependent manner. This chain is Elongation factor 4, found in Escherichia fergusonii (strain ATCC 35469 / DSM 13698 / CCUG 18766 / IAM 14443 / JCM 21226 / LMG 7866 / NBRC 102419 / NCTC 12128 / CDC 0568-73).